A 110-amino-acid chain; its full sequence is MSKEKGDIAEKKAISFLEKSNFEIVEKNFYAKKLGEIDIIAQRNKIYHFIEVKSANDYETAINNITSQKLSKIKRSVDFYIQKNNLNISYSIDVIIVVDDKIELLENITM.

This sequence belongs to the UPF0102 family.

The polypeptide is UPF0102 protein Abu_0255 (Aliarcobacter butzleri (strain RM4018) (Arcobacter butzleri)).